We begin with the raw amino-acid sequence, 257 residues long: Ribonuclease HII (257 aa).

One can recognise an RNase H type-2 domain in the interval 72 to 257; sequence TYIAGIDEVG…FAPIKDMIKK (186 aa). The a divalent metal cation site is built by Asp78, Glu79, and Asp170.

Belongs to the RNase HII family. Requires Mn(2+) as cofactor. The cofactor is Mg(2+).

It is found in the cytoplasm. The enzyme catalyses Endonucleolytic cleavage to 5'-phosphomonoester.. Functionally, endonuclease that specifically degrades the RNA of RNA-DNA hybrids. This Bacillus anthracis (strain A0248) protein is Ribonuclease HII.